Consider the following 715-residue polypeptide: Serine/arginine repetitive matrix protein 5 (715 aa).

Residues 1-13 show a composition bias toward low complexity; sequence MSSPKRSSKPSMS. The interval 1-715 is disordered; it reads MSSPKRSSKP…RSSSSSSKLA (715 aa). Residues 32 to 59 show a composition bias toward polar residues; that stretch reads LKSTKSATPNRSLVPTKPATSRNSVMSP. Low complexity predominate over residues 60–79; sequence SSSKSTKSTSTKRAPSNRPS. Over residues 80-90 the composition is skewed to basic residues; sequence SRSRVRSKART. The span at 92–104 shows a compositional bias: polar residues; it reads SRVSTDTRTSKAS. Residues 112–136 show a composition bias toward basic residues; the sequence is HQRRGTHSRGRTPGRRGSRSSKRSP. Composition is skewed to polar residues over residues 213–224 and 257–272; these read TPSTAKCQTPTG and YSPT…YNQA. The segment covering 273–285 has biased composition (low complexity); sequence STRSRPQSHSQSR. Positions 286–320 are enriched in basic residues; the sequence is SPRRSRSGSQKRTHSRVRSHSWKRNHSRARSRTRK. Basic and acidic residues-rich tracts occupy residues 359–388 and 397–521; these read PSKE…KESG and KQRD…ERDH. A compositionally biased stretch (basic residues) spans 522–536; the sequence is RRSRSPSKERQRRQS. 2 stretches are compositionally biased toward basic and acidic residues: residues 539 to 595 and 611 to 628; these read PNKE…DHSR and SSKE…KEGN. Residues 657 to 666 are compositionally biased toward polar residues; the sequence is TRTSSLSQNR. The segment covering 667-681 has biased composition (low complexity); the sequence is TPSKTSSHSPSTFPS. Over residues 682 to 715 the composition is skewed to polar residues; the sequence is GGQTLSQDDSQADATTSKATLPGERSSSSSSKLA.

The chain is Serine/arginine repetitive matrix protein 5 (SRRM5) from Homo sapiens (Human).